The following is a 230-amino-acid chain: Antiholin-like protein LrgB (230 aa).

7 consecutive transmembrane segments (helical) span residues 5–25 (MTPYFGIVVSLIAYGIGTLLF), 30–50 (GFFLFTPLFVAMVLGIVFLKV), 61–81 (GGKMISFFLEPATIAFAIPLY), 92–112 (WQILSAIVVGSICSVIVVFIV), 149–169 (ITSFAVIFNAVIVYALGALFL), 177–197 (PIAKGLALGTAGHALGVAVGI), and 209–229 (IAVTVVGVVTVVVIPMFMPFI).

The protein belongs to the CidB/LrgB family. LrgB subfamily.

Its subcellular location is the cell membrane. Functionally, inhibits the expression or activity of extracellular murein hydrolases by interacting, possibly with LrgA, with the holin-like protein CidA. The LrgAB and CidA proteins may affect the proton motive force of the membrane. May be involved in programmed cell death (PCD), possibly triggering PCD in response to antibiotics and environmental stresses. The sequence is that of Antiholin-like protein LrgB from Bacillus cereus (strain Q1).